Consider the following 277-residue polypeptide: Release factor glutamine methyltransferase (277 aa).

S-adenosyl-L-methionine is bound by residues 117-121 (GTGTG), D140, W168, and N183. 183-186 (NPPY) provides a ligand contact to substrate.

Belongs to the protein N5-glutamine methyltransferase family. PrmC subfamily.

It catalyses the reaction L-glutaminyl-[peptide chain release factor] + S-adenosyl-L-methionine = N(5)-methyl-L-glutaminyl-[peptide chain release factor] + S-adenosyl-L-homocysteine + H(+). Its function is as follows. Methylates the class 1 translation termination release factors RF1/PrfA and RF2/PrfB on the glutamine residue of the universally conserved GGQ motif. The protein is Release factor glutamine methyltransferase of Shigella dysenteriae serotype 1 (strain Sd197).